The primary structure comprises 303 residues: tRNA dimethylallyltransferase (303 aa).

Residue 12–19 participates in ATP binding; sequence GPTGVGKT. 14–19 provides a ligand contact to substrate; that stretch reads TGVGKT. The segment at 37 to 40 is interaction with substrate tRNA; it reads DSAQ.

It belongs to the IPP transferase family. As to quaternary structure, monomer. Mg(2+) serves as cofactor.

The catalysed reaction is adenosine(37) in tRNA + dimethylallyl diphosphate = N(6)-dimethylallyladenosine(37) in tRNA + diphosphate. Catalyzes the transfer of a dimethylallyl group onto the adenine at position 37 in tRNAs that read codons beginning with uridine, leading to the formation of N6-(dimethylallyl)adenosine (i(6)A). This Fusobacterium nucleatum subsp. nucleatum (strain ATCC 25586 / DSM 15643 / BCRC 10681 / CIP 101130 / JCM 8532 / KCTC 2640 / LMG 13131 / VPI 4355) protein is tRNA dimethylallyltransferase.